We begin with the raw amino-acid sequence, 99 residues long: NADH-quinone oxidoreductase subunit K (99 aa).

3 helical membrane-spanning segments follow: residues 3–23 (PDNYLHLSALLFTIGAAGVLL), 28–48 (IVVFMCVELMLNAANLAFVAF), and 59–79 (VVAFFTMVVAACEVVIGLAII).

It belongs to the complex I subunit 4L family. NDH-1 is composed of 14 different subunits. Subunits NuoA, H, J, K, L, M, N constitute the membrane sector of the complex.

Its subcellular location is the cell membrane. The catalysed reaction is a quinone + NADH + 5 H(+)(in) = a quinol + NAD(+) + 4 H(+)(out). NDH-1 shuttles electrons from NADH, via FMN and iron-sulfur (Fe-S) centers, to quinones in the respiratory chain. The immediate electron acceptor for the enzyme in this species is believed to be a menaquinone. Couples the redox reaction to proton translocation (for every two electrons transferred, four hydrogen ions are translocated across the cytoplasmic membrane), and thus conserves the redox energy in a proton gradient. The polypeptide is NADH-quinone oxidoreductase subunit K (Mycobacterium sp. (strain KMS)).